The following is a 680-amino-acid chain: Chaperone protein dnaK3 (680 aa).

Threonine 205 is modified (phosphothreonine; by autocatalysis). Positions 640-680 (GRERRRDDDEDEWAEPPRTRRSRSYSQRADSAPWDDWDDDW) are disordered.

Belongs to the heat shock protein 70 family.

Acts as a chaperone. The polypeptide is Chaperone protein dnaK3 (dnaK3) (Thermosynechococcus vestitus (strain NIES-2133 / IAM M-273 / BP-1)).